We begin with the raw amino-acid sequence, 256 residues long: uncharacterized protein (256 aa).

Transmembrane regions (helical) follow at residues 32-52 (ILASIFIGFGITAASKTGSYF), 59-79 (FAFPAAAVTFGAAILMIAYGG), 112-132 (YAGNLIGAILFAILISATGLF), 156-176 (LFFRGMLCNWLVCLAFFIPMS), 184-204 (LFTMMLFVFCFFISGFEHSIA), 207-227 (CTFAISLLIEHPDTVTLMGAV), and 230-250 (LIPVTLGNLTAGIVMMGWMYY).

The protein belongs to the FNT transporter (TC 1.A.16) family.

It localises to the cell membrane. This is an uncharacterized protein from Bacillus subtilis (strain 168).